Reading from the N-terminus, the 334-residue chain is NADH dehydrogenase (ubiquinone) complex I, assembly factor 6 homolog (334 aa).

The transit peptide at 1–11 directs the protein to the mitochondrion; sequence MRRLVRNWNCR.

This sequence belongs to the NDUFAF6 family. Associates with mitochondrial complex I assembly intermediates during its biogenesis. Forms a complex including sicily, ND-42 and Hsp83; the complex is necessary to chaperone ND-42 in the cytoplasm before mitochondrial import; the interaction between sicily and ND-42 is direct and occurs preferably between the unprocessed forms in the cytoplasm; the interaction with Hsp83 is direct. Interacts with ND-30; interaction is stronger between the unprocessed forms in the cytoplasm. As to expression, expressed in the ventral nerve cord, larval brain, motor neuron axons, imaginal disks, and muscles (at protein level).

The protein resides in the mitochondrion inner membrane. The protein localises to the cytoplasm. It localises to the cytosol. Involved in the assembly of mitochondrial NADH:ubiquinone oxidoreductase complex (Complex I) at early stages. Interacts with cytosolic Hsp90 to chaperone the Complex I subunit ND-42 in the cytoplasm. The polypeptide is NADH dehydrogenase (ubiquinone) complex I, assembly factor 6 homolog (Drosophila melanogaster (Fruit fly)).